The following is a 125-amino-acid chain: Fluoride-specific ion channel FluC (125 aa).

Transmembrane regions (helical) follow at residues 5-25, 33-53, 69-89, and 101-121; these read FVFI…LAGF, FFPF…GFLW, FVLV…LETG, and IVNL…GIVL. Na(+) is bound by residues Gly-76 and Thr-79.

The protein belongs to the fluoride channel Fluc/FEX (TC 1.A.43) family.

The protein resides in the cell inner membrane. It carries out the reaction fluoride(in) = fluoride(out). With respect to regulation, na(+) is not transported, but it plays an essential structural role and its presence is essential for fluoride channel function. Functionally, fluoride-specific ion channel. Important for reducing fluoride concentration in the cell, thus reducing its toxicity. The protein is Fluoride-specific ion channel FluC of Desulforapulum autotrophicum (strain ATCC 43914 / DSM 3382 / VKM B-1955 / HRM2) (Desulfobacterium autotrophicum).